Consider the following 352-residue polypeptide: Zinc finger protein 185 (352 aa).

2 disordered regions span residues 1 to 73 and 86 to 121; these read MTTE…ELQS and DVLP…ITPP. A Phosphoserine modification is found at S18. Polar residues predominate over residues 61 to 72; it reads KKTTSSPTQELQ. The residue at position 137 (T137) is a Phosphothreonine. The segment covering 251 to 268 has biased composition (polar residues); it reads VSSGKPVSSHCDSPSSIE. The segment at 251 to 287 is disordered; it reads VSSGKPVSSHCDSPSSIEDSLDLAKKPPHEGTPSERP. Over residues 272-287 the composition is skewed to basic and acidic residues; it reads DLAKKPPHEGTPSERP. Residues 292–347 enclose the LIM zinc-binding domain; the sequence is CTYCSHEIQDCPKITLEHLGICCHEYCFKCGICNKPMGDLLDQIFIHRDTIHCGKC.

Expressed in skin, kidney, ovary, testis. Also expressed in brain, cartilage, heart, lung, spleen and thymus.

It localises to the cytoplasm. The protein resides in the cytoskeleton. The protein localises to the cell junction. Its subcellular location is the focal adhesion. Its function is as follows. May be involved in the regulation of cellular proliferation and/or differentiation. The chain is Zinc finger protein 185 (Znf185) from Mus musculus (Mouse).